Reading from the N-terminus, the 238-residue chain is Cysteine-rich venom protein pseudechetoxin-like (238 aa).

The first 19 residues, 1-19, serve as a signal peptide directing secretion; sequence MIAFIVLLSLAAVLQQSSG. The propeptide occupies 20–28; it reads TVDFASESS. In terms of domain architecture, SCP spans 38–164; sequence VDKHNALRRS…STKYLYVCQY (127 aa). 8 disulfide bridges follow: C75-C153, C92-C165, C148-C162, C184-C191, C187-C196, C200-C233, C209-C227, and C218-C231. The ShKT domain maps to 200-233; it reads CKYEDDFSNCKALAKNSKCQTEWIKSKCPAACFC.

This sequence belongs to the CRISP family. As to expression, expressed by the venom gland.

The protein localises to the secreted. In terms of biological role, blocks olfactory (CNGA2) and retinal (CNGA1) CNG channel currents. Does not affect neither depolarization- nor caffeine-induced contraction of smooth muscle. The chain is Cysteine-rich venom protein pseudechetoxin-like from Notechis scutatus scutatus (Mainland tiger snake).